A 261-amino-acid chain; its full sequence is Undecaprenyl-diphosphatase 2 (261 aa).

Transmembrane regions (helical) follow at residues 1–21, 38–58, 75–95, 103–123, 138–158, 178–198, 212–232, and 240–260; these read MLEALLLGVVEGLTEFLPISS, PGKTYEIVVQLGAILAVCVVF, FAFARNVMVAFLPAAVIGATL, LESPLVAAIALVVGGVAILVI, MSPALALGVGFCQVLAMVPGV, AAEFSFFLAIPTMCGASAYSL, LIALGFVAAFLSALVVVKGFI, and FAPFAWYRIAFGSLMAVLILM.

This sequence belongs to the UppP family.

The protein localises to the cell inner membrane. The catalysed reaction is di-trans,octa-cis-undecaprenyl diphosphate + H2O = di-trans,octa-cis-undecaprenyl phosphate + phosphate + H(+). Functionally, catalyzes the dephosphorylation of undecaprenyl diphosphate (UPP). Confers resistance to bacitracin. The protein is Undecaprenyl-diphosphatase 2 of Paramagnetospirillum magneticum (strain ATCC 700264 / AMB-1) (Magnetospirillum magneticum).